Consider the following 154-residue polypeptide: 6,7-dimethyl-8-ribityllumazine synthase (154 aa).

Residues Phe-22, 56-58 (AFE), and 80-82 (AVI) each bind 5-amino-6-(D-ribitylamino)uracil. (2S)-2-hydroxy-3-oxobutyl phosphate is bound at residue 85-86 (AT). The Proton donor role is filled by His-88. Phe-113 provides a ligand contact to 5-amino-6-(D-ribitylamino)uracil. (2S)-2-hydroxy-3-oxobutyl phosphate is bound at residue Arg-127.

It belongs to the DMRL synthase family. In terms of assembly, forms an icosahedral capsid composed of 60 subunits, arranged as a dodecamer of pentamers.

The catalysed reaction is (2S)-2-hydroxy-3-oxobutyl phosphate + 5-amino-6-(D-ribitylamino)uracil = 6,7-dimethyl-8-(1-D-ribityl)lumazine + phosphate + 2 H2O + H(+). Its pathway is cofactor biosynthesis; riboflavin biosynthesis; riboflavin from 2-hydroxy-3-oxobutyl phosphate and 5-amino-6-(D-ribitylamino)uracil: step 1/2. In terms of biological role, catalyzes the formation of 6,7-dimethyl-8-ribityllumazine by condensation of 5-amino-6-(D-ribitylamino)uracil with 3,4-dihydroxy-2-butanone 4-phosphate. This is the penultimate step in the biosynthesis of riboflavin. This is 6,7-dimethyl-8-ribityllumazine synthase from Geobacillus kaustophilus (strain HTA426).